The sequence spans 444 residues: ATP-dependent RNA helicase DBP8 (444 aa).

The short motif at 3–31 (QSFKELGVAKWLSESLEAMKIHSPTSIQS) is the Q motif element. Residues 34 to 210 (IPEILKGRDC…DKPRAEGKLP (177 aa)) form the Helicase ATP-binding domain. 47-54 (AKTGSGKT) contributes to the ATP binding site. Positions 156 to 159 (DEAD) match the DEAD box motif. Positions 244-390 (YLTSILKLPK…LLEGVDDDKV (147 aa)) constitute a Helicase C-terminal domain. Residues 402 to 418 (KREAMLDMDKESFGERR) are compositionally biased toward basic and acidic residues. The disordered stretch occupies residues 402-444 (KREAMLDMDKESFGERRKVNKKKRAVEEPSGKRQQKKVKKVKS). The span at 434-444 (RQQKKVKKVKS) shows a compositional bias: basic residues.

It belongs to the DEAD box helicase family. DDX49/DBP8 subfamily.

It is found in the nucleus. Its subcellular location is the nucleolus. It carries out the reaction ATP + H2O = ADP + phosphate + H(+). ATP-binding RNA helicase involved in 40S ribosomal subunit biogenesis and is required for the normal formation of 18S rRNAs through pre-rRNA processing at A0, A1 and A2 sites. Required for vegetative growth. This is ATP-dependent RNA helicase DBP8 (DBP8) from Lodderomyces elongisporus (strain ATCC 11503 / CBS 2605 / JCM 1781 / NBRC 1676 / NRRL YB-4239) (Yeast).